The chain runs to 103 residues: Co-chaperonin GroES (103 aa).

This sequence belongs to the GroES chaperonin family. As to quaternary structure, heptamer of 7 subunits arranged in a ring. Interacts with the chaperonin GroEL.

It is found in the cytoplasm. Its function is as follows. Together with the chaperonin GroEL, plays an essential role in assisting protein folding. The GroEL-GroES system forms a nano-cage that allows encapsulation of the non-native substrate proteins and provides a physical environment optimized to promote and accelerate protein folding. GroES binds to the apical surface of the GroEL ring, thereby capping the opening of the GroEL channel. This Gloeothece citriformis (strain PCC 7424) (Cyanothece sp. (strain PCC 7424)) protein is Co-chaperonin GroES.